The sequence spans 460 residues: Kynureninase (460 aa).

Pyridoxal 5'-phosphate is bound by residues leucine 127, threonine 128, 165–168 (FPSD), aspartate 249, histidine 252, and tyrosine 274. Lysine 275 carries the N6-(pyridoxal phosphate)lysine modification. Pyridoxal 5'-phosphate is bound by residues tryptophan 304 and asparagine 332.

This sequence belongs to the kynureninase family. Homodimer. It depends on pyridoxal 5'-phosphate as a cofactor.

It localises to the cytoplasm. It catalyses the reaction L-kynurenine + H2O = anthranilate + L-alanine + H(+). It carries out the reaction 3-hydroxy-L-kynurenine + H2O = 3-hydroxyanthranilate + L-alanine + H(+). Its pathway is amino-acid degradation; L-kynurenine degradation; L-alanine and anthranilate from L-kynurenine: step 1/1. It functions in the pathway cofactor biosynthesis; NAD(+) biosynthesis; quinolinate from L-kynurenine: step 2/3. Functionally, catalyzes the cleavage of L-kynurenine (L-Kyn) and L-3-hydroxykynurenine (L-3OHKyn) into anthranilic acid (AA) and 3-hydroxyanthranilic acid (3-OHAA), respectively. This chain is Kynureninase, found in Monosiga brevicollis (Choanoflagellate).